The primary structure comprises 767 residues: Protein NLP3 (767 aa).

Disordered stretches follow at residues 462–494 (ATPP…RKTK), 590–622 (INPT…CSSE), and 646–672 (HEDQ…KAKD). The RWP-RK domain maps to 482–566 (SASSLENRKR…MDSVEGVQGS (85 aa)). The stretch at 485–506 (SLENRKRKTKAEKDITLDTLRQ) forms a coiled coil. Low complexity-rich tracts occupy residues 604–622 (PSSS…CSSE) and 655–667 (TSSL…ATTP). The 87-residue stretch at 673-759 (GMKVKAMFGD…ETIRILVHHP (87 aa)) folds into the PB1 domain.

The protein resides in the nucleus. Its function is as follows. Probable transcription factor. The protein is Protein NLP3 (NLP3) of Arabidopsis thaliana (Mouse-ear cress).